A 431-amino-acid polypeptide reads, in one-letter code: Cyclin-B2-4 (431 aa).

The tract at residues 1-30 is disordered; that stretch reads MGGSDENRHGVIGPMNRQQGGLRGGKVIPT.

It belongs to the cyclin family. Cyclin AB subfamily. As to quaternary structure, interacts with SMR11.

The polypeptide is Cyclin-B2-4 (CYCB2-4) (Arabidopsis thaliana (Mouse-ear cress)).